Reading from the N-terminus, the 232-residue chain is Purine nucleoside phosphorylase DeoD-type (232 aa).

An a purine D-ribonucleoside-binding site is contributed by His4. Phosphate contacts are provided by residues Gly20, Arg24, Arg43, and 87–90; that span reads RIGT. Residues 179-181 and 203-204 contribute to the a purine D-ribonucleoside site; these read EME and SD. The active-site Proton donor is Asp204.

This sequence belongs to the PNP/UDP phosphorylase family. In terms of assembly, homohexamer; trimer of homodimers.

It carries out the reaction a purine D-ribonucleoside + phosphate = a purine nucleobase + alpha-D-ribose 1-phosphate. The catalysed reaction is a purine 2'-deoxy-D-ribonucleoside + phosphate = a purine nucleobase + 2-deoxy-alpha-D-ribose 1-phosphate. Its function is as follows. Catalyzes the reversible phosphorolytic breakdown of the N-glycosidic bond in the beta-(deoxy)ribonucleoside molecules, with the formation of the corresponding free purine bases and pentose-1-phosphate. The sequence is that of Purine nucleoside phosphorylase DeoD-type from Caldanaerobacter subterraneus subsp. tengcongensis (strain DSM 15242 / JCM 11007 / NBRC 100824 / MB4) (Thermoanaerobacter tengcongensis).